The sequence spans 325 residues: ATP phosphoribosyltransferase (325 aa).

The protein belongs to the ATP phosphoribosyltransferase family. Long subfamily. The cofactor is Mg(2+).

Its subcellular location is the cytoplasm. The catalysed reaction is 1-(5-phospho-beta-D-ribosyl)-ATP + diphosphate = 5-phospho-alpha-D-ribose 1-diphosphate + ATP. It functions in the pathway amino-acid biosynthesis; L-histidine biosynthesis; L-histidine from 5-phospho-alpha-D-ribose 1-diphosphate: step 1/9. With respect to regulation, feedback inhibited by histidine. Its function is as follows. Catalyzes the condensation of ATP and 5-phosphoribose 1-diphosphate to form N'-(5'-phosphoribosyl)-ATP (PR-ATP). Has a crucial role in the pathway because the rate of histidine biosynthesis seems to be controlled primarily by regulation of HisG enzymatic activity. This Rhodopseudomonas palustris (strain HaA2) protein is ATP phosphoribosyltransferase.